The primary structure comprises 185 residues: MAGPRPRWRDQLLFMSIIVLVIVVICLMFYALLWEAGNLTDLPNLRIGFYNFCLWNEDTSTLQCHQFPELEALGVPRVGLGLARLGVYGSLVLTLFAPQPLLLAQCNSDERAWRLAVGFLAVSSVLLAGGLGLFLSYVWKWVRLSLPGPGFLALGSAQALLILLLIAMAVFPLRAERAESKLESC.

Topologically, residues 1–11 (MAGPRPRWRDQ) are cytoplasmic. The helical transmembrane segment at 12–32 (LLFMSIIVLVIVVICLMFYAL) threads the bilayer. The Extracellular segment spans residues 33–77 (LWEAGNLTDLPNLRIGFYNFCLWNEDTSTLQCHQFPELEALGVPR). Asn-38 carries N-linked (GlcNAc...) asparagine glycosylation. Residues 78-98 (VGLGLARLGVYGSLVLTLFAP) traverse the membrane as a helical segment. At 99–114 (QPLLLAQCNSDERAWR) the chain is on the cytoplasmic side. Residues 115 to 135 (LAVGFLAVSSVLLAGGLGLFL) traverse the membrane as a helical segment. The Extracellular segment spans residues 136-150 (SYVWKWVRLSLPGPG). The helical transmembrane segment at 151–171 (FLALGSAQALLILLLIAMAVF) threads the bilayer. Residues 172–185 (PLRAERAESKLESC) lie on the Cytoplasmic side of the membrane.

In terms of tissue distribution, expression significantly higher in gliomas than in normal brain tissues.

Its subcellular location is the membrane. This Homo sapiens (Human) protein is Transmembrane protein 140 (TMEM140).